A 333-amino-acid chain; its full sequence is DNA-directed RNA polymerase subunit alpha (333 aa).

An alpha N-terminal domain (alpha-NTD) region spans residues 1–239; the sequence is MSAVLDKGSL…TQARCFLNIA (239 aa). Residues 259–333 form an alpha C-terminal domain (alpha-CTD) region; it reads DASDLLSARI…SLGMNLDSHG (75 aa).

This sequence belongs to the RNA polymerase alpha chain family. As to quaternary structure, homodimer. The RNAP catalytic core consists of 2 alpha, 1 beta, 1 beta' and 1 omega subunit. When a sigma factor is associated with the core the holoenzyme is formed, which can initiate transcription.

It carries out the reaction RNA(n) + a ribonucleoside 5'-triphosphate = RNA(n+1) + diphosphate. Functionally, DNA-dependent RNA polymerase catalyzes the transcription of DNA into RNA using the four ribonucleoside triphosphates as substrates. The sequence is that of DNA-directed RNA polymerase subunit alpha from Neorickettsia sennetsu (strain ATCC VR-367 / Miyayama) (Ehrlichia sennetsu).